The primary structure comprises 169 residues: Crossover junction endodeoxyribonuclease RuvC (169 aa).

Active-site residues include Asp-12, Glu-72, and Asp-144. Residues Asp-12, Glu-72, and Asp-144 each coordinate Mg(2+).

This sequence belongs to the RuvC family. As to quaternary structure, homodimer which binds Holliday junction (HJ) DNA. The HJ becomes 2-fold symmetrical on binding to RuvC with unstacked arms; it has a different conformation from HJ DNA in complex with RuvA. In the full resolvosome a probable DNA-RuvA(4)-RuvB(12)-RuvC(2) complex forms which resolves the HJ. The cofactor is Mg(2+).

It localises to the cytoplasm. The catalysed reaction is Endonucleolytic cleavage at a junction such as a reciprocal single-stranded crossover between two homologous DNA duplexes (Holliday junction).. In terms of biological role, the RuvA-RuvB-RuvC complex processes Holliday junction (HJ) DNA during genetic recombination and DNA repair. Endonuclease that resolves HJ intermediates. Cleaves cruciform DNA by making single-stranded nicks across the HJ at symmetrical positions within the homologous arms, yielding a 5'-phosphate and a 3'-hydroxyl group; requires a central core of homology in the junction. The consensus cleavage sequence is 5'-(A/T)TT(C/G)-3'. Cleavage occurs on the 3'-side of the TT dinucleotide at the point of strand exchange. HJ branch migration catalyzed by RuvA-RuvB allows RuvC to scan DNA until it finds its consensus sequence, where it cleaves and resolves the cruciform DNA. This chain is Crossover junction endodeoxyribonuclease RuvC, found in Azorhizobium caulinodans (strain ATCC 43989 / DSM 5975 / JCM 20966 / LMG 6465 / NBRC 14845 / NCIMB 13405 / ORS 571).